The chain runs to 618 residues: UvrABC system protein C (618 aa).

In terms of domain architecture, GIY-YIG spans 20-98 (TAPGVYRMYA…IKSLSPRYNV (79 aa)). The UVR domain occupies 207-242 (DQLGEEIMQSMQQASEALEFERAARLRDLLSSLRSM).

The protein belongs to the UvrC family. In terms of assembly, interacts with UvrB in an incision complex.

The protein resides in the cytoplasm. In terms of biological role, the UvrABC repair system catalyzes the recognition and processing of DNA lesions. UvrC both incises the 5' and 3' sides of the lesion. The N-terminal half is responsible for the 3' incision and the C-terminal half is responsible for the 5' incision. The polypeptide is UvrABC system protein C (Xanthomonas oryzae pv. oryzae (strain MAFF 311018)).